We begin with the raw amino-acid sequence, 455 residues long: MNFDIEKLDSQMASDEKKLFFIQTYGCQMNEEDSEKLSGMLKRMGYENTENRDEASIIIFNTCCVRENAENKVFGNLGALKKQKEKNPDLVIGICGCMMQQKGMADDILKRFPYVNIIFGTHNSYKFPEYLNRVKTEGVQIKEIIDKETEIVEGIPIDRKSDIKGFVTIMYGCNNFCTYCIVPYVRGRERSRKPEDIVNEIKDMVTRGYKEVTLLGQNVNSYGKGLEENITFADLLRKVNEIEGLERIRFMTSHPKDLTLDVVYAIRDCDKVCEQIHLPVQSGSDRILKEMNRHYTKEQYITLAKKIRAEIPDVTFSTDIIVGFPGETEEDFSETLELAKEVRYDAAFTFIYSRRNHTPADKMENQIPDEIKHERFNRLVEIVNTGIAKGNKDAEGKIYEVLVEGYSKNDEAKLTGRTRNGRLVNFEGGEDLIGKLVNVKIIKANSFSLIGEVEK.

The 119-residue stretch at 18–136 (KLFFIQTYGC…FPEYLNRVKT (119 aa)) folds into the MTTase N-terminal domain. [4Fe-4S] cluster-binding residues include cysteine 27, cysteine 63, cysteine 97, cysteine 173, cysteine 177, and cysteine 180. One can recognise a Radical SAM core domain in the interval 159–389 (RKSDIKGFVT…VEIVNTGIAK (231 aa)). Residues 392–455 (KDAEGKIYEV…SFSLIGEVEK (64 aa)) form the TRAM domain.

This sequence belongs to the methylthiotransferase family. MiaB subfamily. Monomer. It depends on [4Fe-4S] cluster as a cofactor.

The protein localises to the cytoplasm. The catalysed reaction is N(6)-dimethylallyladenosine(37) in tRNA + (sulfur carrier)-SH + AH2 + 2 S-adenosyl-L-methionine = 2-methylsulfanyl-N(6)-dimethylallyladenosine(37) in tRNA + (sulfur carrier)-H + 5'-deoxyadenosine + L-methionine + A + S-adenosyl-L-homocysteine + 2 H(+). Catalyzes the methylthiolation of N6-(dimethylallyl)adenosine (i(6)A), leading to the formation of 2-methylthio-N6-(dimethylallyl)adenosine (ms(2)i(6)A) at position 37 in tRNAs that read codons beginning with uridine. The sequence is that of tRNA-2-methylthio-N(6)-dimethylallyladenosine synthase from Clostridium beijerinckii (strain ATCC 51743 / NCIMB 8052) (Clostridium acetobutylicum).